Here is a 354-residue protein sequence, read N- to C-terminus: Isopentenyl-diphosphate delta-isomerase (354 aa).

6–7 (RK) serves as a coordination point for substrate. FMN-binding positions include 63–65 (AMT), Ser-93, and Asn-122. 93–95 (SQR) serves as a coordination point for substrate. Residue Gln-160 coordinates substrate. Glu-161 is a Mg(2+) binding site. FMN is bound by residues Lys-192, Thr-221, 273-275 (GIR), and 294-295 (SQ).

Belongs to the IPP isomerase type 2 family. In terms of assembly, homooctamer. Dimer of tetramers. Requires FMN as cofactor. It depends on NADPH as a cofactor. The cofactor is Mg(2+).

Its subcellular location is the cytoplasm. The enzyme catalyses isopentenyl diphosphate = dimethylallyl diphosphate. Involved in the biosynthesis of isoprenoids. Catalyzes the 1,3-allylic rearrangement of the homoallylic substrate isopentenyl (IPP) to its allylic isomer, dimethylallyl diphosphate (DMAPP). This Pyrobaculum islandicum (strain DSM 4184 / JCM 9189 / GEO3) protein is Isopentenyl-diphosphate delta-isomerase.